The primary structure comprises 671 residues: UvrABC system protein B (671 aa).

One can recognise a Helicase ATP-binding domain in the interval glutamate 25–arginine 412. ATP is bound at residue glycine 38–threonine 45. The Beta-hairpin signature appears at tyrosine 91–isoleucine 114. Positions glutamine 429 to isoleucine 582 constitute a Helicase C-terminal domain. Residues proline 601–asparagine 623 form a disordered region. The segment covering alanine 614–asparagine 623 has biased composition (basic and acidic residues). The region spanning threonine 632 to arginine 667 is the UVR domain.

Belongs to the UvrB family. In terms of assembly, forms a heterotetramer with UvrA during the search for lesions. Interacts with UvrC in an incision complex.

The protein resides in the cytoplasm. In terms of biological role, the UvrABC repair system catalyzes the recognition and processing of DNA lesions. A damage recognition complex composed of 2 UvrA and 2 UvrB subunits scans DNA for abnormalities. Upon binding of the UvrA(2)B(2) complex to a putative damaged site, the DNA wraps around one UvrB monomer. DNA wrap is dependent on ATP binding by UvrB and probably causes local melting of the DNA helix, facilitating insertion of UvrB beta-hairpin between the DNA strands. Then UvrB probes one DNA strand for the presence of a lesion. If a lesion is found the UvrA subunits dissociate and the UvrB-DNA preincision complex is formed. This complex is subsequently bound by UvrC and the second UvrB is released. If no lesion is found, the DNA wraps around the other UvrB subunit that will check the other stand for damage. This Pseudomonas fluorescens (strain ATCC BAA-477 / NRRL B-23932 / Pf-5) protein is UvrABC system protein B.